A 168-amino-acid polypeptide reads, in one-letter code: Pathogenesis-related protein 1B (168 aa).

A signal peptide spans 1 to 30 (MGFFLFSQMPSFFLVSTLLLFLIISHSSHA). The SCP domain maps to 38-156 (LDAHNTARAD…NGGYVVSCNY (119 aa)).

Belongs to the CRISP family. Three disulfide bonds are present.

Its subcellular location is the vacuole. Functionally, probably involved in the defense reaction of plants against pathogens. The sequence is that of Pathogenesis-related protein 1B from Nicotiana tabacum (Common tobacco).